The chain runs to 459 residues: Cysteine--tRNA ligase (459 aa).

Cys28 is a binding site for Zn(2+). The short motif at 30-40 (VTVYDLCHIGH) is the 'HIGH' region element. Zn(2+)-binding residues include Cys209, His234, and Glu238. The 'KMSKS' region signature appears at 266–270 (KMSKS). Lys269 serves as a coordination point for ATP.

The protein belongs to the class-I aminoacyl-tRNA synthetase family. Monomer. Zn(2+) is required as a cofactor.

The protein resides in the cytoplasm. It carries out the reaction tRNA(Cys) + L-cysteine + ATP = L-cysteinyl-tRNA(Cys) + AMP + diphosphate. This is Cysteine--tRNA ligase from Shewanella oneidensis (strain ATCC 700550 / JCM 31522 / CIP 106686 / LMG 19005 / NCIMB 14063 / MR-1).